The sequence spans 385 residues: Exopolygalacturonase rpg15 (385 aa).

The N-terminal stretch at 1–26 is a signal peptide; the sequence is MVRFISFTSPIAALLLLSFGVKHAST. Asn-143, Asn-161, Asn-164, and Asn-180 each carry an N-linked (GlcNAc...) asparagine glycan. 4 PbH1 repeats span residues 165-195, 196-217, 219-241, and 249-270; these read STNL…DLYH, SSGI…AIKE, VEKV…GSLG, and VKHV…RVKT. The active-site Proton donor is the Asp-210. A disulfide bridge links Cys-212 with Cys-229. Asn-226 carries an N-linked (GlcNAc...) asparagine glycan. His-233 is an active-site residue. Asn-256, Asn-319, and Asn-343 each carry an N-linked (GlcNAc...) asparagine glycan. An intrachain disulfide couples Cys-344 to Cys-350. Residues 350-376 form a PbH1 5 repeat; the sequence is CSDITFSGIDITKASNTTDNVCVYLEG. N-linked (GlcNAc...) asparagine glycosylation is present at Asn-365.

It belongs to the glycosyl hydrolase 28 family. N-glycosylated.

The protein localises to the secreted. The catalysed reaction is [(1-&gt;4)-alpha-D-galacturonosyl](n) + H2O = alpha-D-galacturonate + [(1-&gt;4)-alpha-D-galacturonosyl](n-1). In terms of biological role, specific in hydrolyzing the terminal glycosidic bond of polygalacturonic acid and oligogalacturonates. This chain is Exopolygalacturonase rpg15, found in Rhizopus delemar (strain RA 99-880 / ATCC MYA-4621 / FGSC 9543 / NRRL 43880) (Mucormycosis agent).